The primary structure comprises 666 residues: Endogenous retrovirus group K member 19 Gag polyprotein (666 aa).

The N-myristoyl glycine moiety is linked to residue Gly2. Disordered regions lie at residues Leu170 to Val189 and Pro223 to Leu264. Residues Gly232–Pro247 show a composition bias toward pro residues. 2 CCHC-type zinc fingers span residues Gly544–Val561 and Asp580–Ser597. The interval Lys598–Pro640 is disordered. Residues Gln604–Gly622 show a composition bias toward polar residues.

It belongs to the beta type-B retroviral Gag protein family. HERV class-II K(HML-2) gag subfamily. Post-translationally, myristoylation is essential for retroviral assembly. Alteration of the glycine residue leads to a block in the budding of particles and an accumulation of Gag inside the cell. In terms of processing, specific enzymatic cleavages may yield mature proteins.

The protein resides in the cell membrane. The products of the Gag polyproteins of infectious retroviruses perform highly complex orchestrated tasks during the assembly, budding, maturation, and infection stages of the viral replication cycle. During viral assembly, the proteins form membrane associations and self-associations that ultimately result in budding of an immature virion from the infected cell. Gag precursors also function during viral assembly to selectively bind and package two plus strands of genomic RNA. Endogenous Gag proteins may have kept, lost or modified their original function during evolution. The sequence is that of Endogenous retrovirus group K member 19 Gag polyprotein (ERVK-19) from Homo sapiens (Human).